The chain runs to 257 residues: UPF0246 protein VCM66_2278 (257 aa).

It belongs to the UPF0246 family.

In Vibrio cholerae serotype O1 (strain M66-2), this protein is UPF0246 protein VCM66_2278.